A 338-amino-acid polypeptide reads, in one-letter code: Fructose-1,6-bisphosphatase 1 (338 aa).

Thr-2 is modified (N-acetylthreonine). AMP contacts are provided by residues 18 to 22 (VMEEG) and 28 to 32 (TGEMT). Positions 69 and 98 each coordinate Mg(2+). Residue 113 to 114 (KY) coordinates AMP. Mg(2+) is bound by residues Asp-119, Leu-121, and Asp-122. 122–125 (DGSS) serves as a coordination point for substrate. Lys-141 is a binding site for AMP. An N6-succinyllysine modification is found at Lys-151. Residue Ser-208 is modified to Phosphoserine. Substrate-binding positions include 213-216 (NEGY), 244-249 (RYVGSM), Tyr-265, and 275-277 (KLR). Tyr-216, Tyr-245, and Tyr-265 each carry phosphotyrosine. Glu-281 lines the Mg(2+) pocket.

It belongs to the FBPase class 1 family. Homotetramer. Requires Mg(2+) as cofactor.

The enzyme catalyses beta-D-fructose 1,6-bisphosphate + H2O = beta-D-fructose 6-phosphate + phosphate. Its pathway is carbohydrate biosynthesis; gluconeogenesis. With respect to regulation, subject to complex allosteric regulation. The enzyme can assume an active R-state, or an inactive T-state. Intermediate conformations may exist. AMP acts as an allosteric inhibitor. AMP binding affects the turnover of bound substrate and not the affinity for substrate. Fructose 2,6-bisphosphate acts as a competitive inhibitor. Fructose 2,6-bisphosphate and AMP have synergistic effects. Catalyzes the hydrolysis of fructose 1,6-bisphosphate to fructose 6-phosphate in the presence of divalent cations, acting as a rate-limiting enzyme in gluconeogenesis. Plays a role in regulating glucose sensing and insulin secretion of pancreatic beta-cells. Appears to modulate glycerol gluconeogenesis in liver. Important regulator of appetite and adiposity; increased expression of the protein in liver after nutrient excess increases circulating satiety hormones and reduces appetite-stimulating neuropeptides and thus seems to provide a feedback mechanism to limit weight gain. In Bos taurus (Bovine), this protein is Fructose-1,6-bisphosphatase 1 (FBP1).